Here is a 113-residue protein sequence, read N- to C-terminus: UPF0102 protein Dgeo_1894 (113 aa).

The protein belongs to the UPF0102 family.

The protein is UPF0102 protein Dgeo_1894 of Deinococcus geothermalis (strain DSM 11300 / CIP 105573 / AG-3a).